The following is a 543-amino-acid chain: Chaperonin GroEL (543 aa).

ATP contacts are provided by residues 29 to 32 (TLGP), 86 to 90 (DGTTT), Gly-413, 478 to 480 (NAA), and Asp-494.

The protein belongs to the chaperonin (HSP60) family. In terms of assembly, forms a cylinder of 14 subunits composed of two heptameric rings stacked back-to-back. Interacts with the co-chaperonin GroES.

The protein resides in the cytoplasm. It catalyses the reaction ATP + H2O + a folded polypeptide = ADP + phosphate + an unfolded polypeptide.. Functionally, together with its co-chaperonin GroES, plays an essential role in assisting protein folding. The GroEL-GroES system forms a nano-cage that allows encapsulation of the non-native substrate proteins and provides a physical environment optimized to promote and accelerate protein folding. This Lactobacillus gasseri (strain ATCC 33323 / DSM 20243 / BCRC 14619 / CIP 102991 / JCM 1131 / KCTC 3163 / NCIMB 11718 / NCTC 13722 / AM63) protein is Chaperonin GroEL.